We begin with the raw amino-acid sequence, 470 residues long: Argininosuccinate lyase (470 aa).

It belongs to the lyase 1 family. Argininosuccinate lyase subfamily.

The protein resides in the cytoplasm. The catalysed reaction is 2-(N(omega)-L-arginino)succinate = fumarate + L-arginine. The protein operates within amino-acid biosynthesis; L-arginine biosynthesis; L-arginine from L-ornithine and carbamoyl phosphate: step 3/3. This is Argininosuccinate lyase from Mycobacterium sp. (strain MCS).